A 260-amino-acid chain; its full sequence is Caveolae-associated protein 3 (260 aa).

The interval 1 to 84 is interaction with CAVIN1; it reads MGESALESGP…SNTLAQLLAK (84 aa). The tract at residues 20-78 is leucine-zipper; it reads VHAVTVVTLLEKLATMLETLRERQGGLAQRQGGLAGSVRRIQSNLGALSRSHDTTSNTL. Residues serine 62 and serine 70 each carry the phosphoserine modification. Lysine 128 participates in a covalent cross-link: Glycyl lysine isopeptide (Lys-Gly) (interchain with G-Cter in SUMO2). An interaction with CAV1 region spans residues 135–201; sequence AKAFQKAPEP…SGRKGHAAPT (67 aa). Positions 140–260 are disordered; the sequence is KAPEPLGPVE…AAVLQVESAA (121 aa). Residues 157-168 are compositionally biased toward acidic residues; that stretch reads AEAEESSDEEEP. Serine 162, serine 163, and serine 171 each carry phosphoserine. Residues 201 to 210 are compositionally biased toward pro residues; sequence TPTPVKPPRL.

The protein belongs to the CAVIN family. In terms of assembly, component of the CAVIN complex composed of CAVIN1, CAVIN2, CAVIN3 and CAVIN4. Interacts with PRKCD and with phosphatidylserine. Phosphatidylserine may form a bridge between PKC and PKC-binding partners and stabilize the binding. Interacts with PER2. Interacts with CAVIN1 and EPS15L1. Interacts (via leucine-zipper domain) with CAV1 in a cholesterol-sensitive manner. In terms of processing, in vitro, phosphorylated by PRKCD.

It is found in the cytoplasm. It localises to the membrane. Its subcellular location is the caveola. The protein localises to the cytosol. In terms of biological role, regulates the traffic and/or budding of caveolae. Plays a role in caveola formation in a tissue-specific manner. Required for the formation of caveolae in smooth muscle but not in the lung and heart endothelial cells. Regulates the equilibrium between cell surface-associated and cell surface-dissociated caveolae by promoting the rapid release of caveolae from the cell surface. Plays a role in the regulation of the circadian clock. Modulates the period length and phase of circadian gene expression and also regulates expression and interaction of the core clock components PER1/2 and CRY1/2. This is Caveolae-associated protein 3 (CAVIN3) from Bos taurus (Bovine).